An 80-amino-acid polypeptide reads, in one-letter code: Metallothionein-like protein type 2 (80 aa).

Belongs to the metallothionein superfamily. Type 15 family.

Metallothioneins have a high content of cysteine residues that bind various heavy metals. In Brassica campestris (Field mustard), this protein is Metallothionein-like protein type 2.